The following is a 343-amino-acid chain: Protein SOSEKI 4 (343 aa).

A DIX-like oligomerization domain region spans residues 18–109 (RIVPVVYYLS…YVLKGSQILD (92 aa)). The tract at residues 148 to 194 (RKLSMDASTQTDDRRRRKSPVDEVNEVTELSREEITSPPQSDSSPET) is disordered. A compositionally biased stretch (polar residues) spans 184–194 (SPPQSDSSPET). Positions 233–234 (CG) match the Association to cell membranes motif.

Belongs to the SOSEKI family. In terms of assembly, homodimer. Forms long polymer filaments with other SOKs proteins polymers (e.g. SOK1, SOK2, SOK3 and SOK4) crucial for polar localization and biological activity. Binds to ANGUSTIFOLIA (AN). As to expression, expressed during embryogenesis and in roots.

It is found in the cell membrane. Functionally, SOSEKI proteins (SOK1-5) locally interpret global polarity cues and can influence cell division orientation to coordinate cell polarization relative to body axes, probably by guiding ANGUSTIFOLIA (AN) polarized localization. Positive regulator of auxin (indole-3-acetic acid, IAA) biosynthesis and signaling pathway leading to the modulation of seedling growth, plant and inflorescence development. Negative regulator of stress responses (e.g. salinity and osmotic stress). This chain is Protein SOSEKI 4, found in Arabidopsis thaliana (Mouse-ear cress).